Consider the following 232-residue polypeptide: MDAREMKIKAAEAALAHVESGMRLGIGTGSTAEEFVRLLAEKVAGGFQVEGVPTSERTARLCVELGVPLKSLDELPALDLTVDGADEVDPALRLIKGGGGALLREKIVAAASQRMIVIADESKLVETLGAFALPIEVNPFGLVSTRIAIEKVAARLGLSGELNLRQSGDGEFTTDGGHHIIDASFGRIPDAEALSSELNSIPGVVEHGLFINMAALAIIAGPAGARTLQANR.

Residues T28–T31, D83–D86, and K96–G99 contribute to the substrate site. The active-site Proton acceptor is E105. Residue K123 coordinates substrate.

Belongs to the ribose 5-phosphate isomerase family. In terms of assembly, homodimer.

The catalysed reaction is aldehydo-D-ribose 5-phosphate = D-ribulose 5-phosphate. Its pathway is carbohydrate degradation; pentose phosphate pathway; D-ribose 5-phosphate from D-ribulose 5-phosphate (non-oxidative stage): step 1/1. In terms of biological role, catalyzes the reversible conversion of ribose-5-phosphate to ribulose 5-phosphate. The sequence is that of Ribose-5-phosphate isomerase A from Rhizobium etli (strain ATCC 51251 / DSM 11541 / JCM 21823 / NBRC 15573 / CFN 42).